A 679-amino-acid chain; its full sequence is UvrABC system protein B (679 aa).

One can recognise a Helicase ATP-binding domain in the interval 31-414 (ENLTDGLAHQ…ELEKSGSEII (384 aa)). Residue 44–51 (GVTGSGKT) participates in ATP binding. The Beta-hairpin motif lies at 97-120 (YYDYYQPEAYVPSSDTFIEKDASI). Positions 436-589 (QVDDLLSEAR…QTKYNEEHGI (154 aa)) constitute a Helicase C-terminal domain. Positions 639-674 (QQQIKKLEQQMYKFAQDLEFEKAAAIRDQLHQLREQ) constitute a UVR domain.

It belongs to the UvrB family. In terms of assembly, forms a heterotetramer with UvrA during the search for lesions. Interacts with UvrC in an incision complex.

The protein resides in the cytoplasm. Functionally, the UvrABC repair system catalyzes the recognition and processing of DNA lesions. A damage recognition complex composed of 2 UvrA and 2 UvrB subunits scans DNA for abnormalities. Upon binding of the UvrA(2)B(2) complex to a putative damaged site, the DNA wraps around one UvrB monomer. DNA wrap is dependent on ATP binding by UvrB and probably causes local melting of the DNA helix, facilitating insertion of UvrB beta-hairpin between the DNA strands. Then UvrB probes one DNA strand for the presence of a lesion. If a lesion is found the UvrA subunits dissociate and the UvrB-DNA preincision complex is formed. This complex is subsequently bound by UvrC and the second UvrB is released. If no lesion is found, the DNA wraps around the other UvrB subunit that will check the other stand for damage. The polypeptide is UvrABC system protein B (Haemophilus influenzae (strain ATCC 51907 / DSM 11121 / KW20 / Rd)).